Consider the following 2123-residue polypeptide: Toxin Afp18 (2123 aa).

The segment at 864–919 (FFDNSDQDADQPRVRRKREMTDEIMLSDGSSRSEAKALPDENELDTDQSKSRPESA) is disordered. The interval 1771–2123 (VFDSANTNRS…GNSTQSSGLS (353 aa)) is tyrosine glycosyltransferase. Residues 1850-1852 (IWV) and 1940-1941 (SD) each bind UDP-N-acetyl-alpha-D-glucosamine. A divalent metal cation-binding residues include Asp-1957 and Asp-1959. The DxDD motif signature appears at 1957 to 1960 (DIDD). Asn-1993 contributes to the UDP-N-acetyl-alpha-D-glucosamine binding site.

Requires a divalent metal cation as cofactor.

It is found in the secreted. Its subcellular location is the host cell membrane. It catalyses the reaction L-tyrosyl-[protein] + UDP-N-acetyl-alpha-D-glucosamine = O-(N-acetyl-alpha-D-glucosaminyl)-L-tyrosyl-[protein] + UDP + H(+). In terms of biological role, toxin component of the prophage tail-derived protein translocation system Afp, which is the causative agent of enteric redmouth disease in salmonid fish species. Mono-O-GlcNAcylates the small GTPase RhoA in eukaryotic host cells at Tyr-34, using UDP-N-acetylglucosamine (UDP-GlcNAc) as the sugar donor. Glycosylation of RhoA results in impaired effector and regulator interaction and inactivation of downstream RhoA signaling which leads to actin filament depolymerization and blocks cytokinesis and gastrulation during zebrafish embryo development. To a lesser extent, is also able to glycosylate other Rho family GTPases (RhoB, RhoC, Rac1, Rac2, Rac3, and Cdc42) in vitro at a switch I tyrosine residue, but not Ras proteins. This is Toxin Afp18 from Yersinia ruckeri serotype O1 (strain ATCC 29473 / DSM 18506 / JCM 15110 / CCUG 14190 / NCIMB 2194 / NCTC 12986 / 2396-61).